The primary structure comprises 396 residues: Elongation factor Tu (396 aa).

The 196-residue stretch at 10–205 folds into the tr-type G domain; the sequence is KPHVNIGTIG…AVDESIPDPV (196 aa). The segment at 19-26 is G1; that stretch reads GHVDHGKT. Residue 19–26 participates in GTP binding; that stretch reads GHVDHGKT. Threonine 26 contacts Mg(2+). The G2 stretch occupies residues 62 to 66; the sequence is GITIN. Positions 83 to 86 are G3; sequence DAPG. GTP is bound by residues 83-87 and 138-141; these read DAPGH and NKAD. Positions 138–141 are G4; that stretch reads NKAD. Residues 175–177 are G5; the sequence is SAL.

It belongs to the TRAFAC class translation factor GTPase superfamily. Classic translation factor GTPase family. EF-Tu/EF-1A subfamily. As to quaternary structure, monomer.

Its subcellular location is the cytoplasm. The enzyme catalyses GTP + H2O = GDP + phosphate + H(+). Functionally, GTP hydrolase that promotes the GTP-dependent binding of aminoacyl-tRNA to the A-site of ribosomes during protein biosynthesis. This Mycobacterium avium (strain 104) protein is Elongation factor Tu.